Reading from the N-terminus, the 93-residue chain is MKTFVLLSALVLLAFQVQADPIHKTDEETNTEEQPGEEDQAVSISFGGQEGSALHEELSKKLICYCRIRGCKRRERVFGTCRNLFLTFVFCCS.

The N-terminal stretch at 1-19 (MKTFVLLSALVLLAFQVQA) is a signal peptide. Residues 20–58 (DPIHKTDEETNTEEQPGEEDQAVSISFGGQEGSALHEEL) constitute a propeptide that is removed on maturation. 3 disulfide bridges follow: cysteine 64–cysteine 92, cysteine 66–cysteine 81, and cysteine 71–cysteine 91.

It belongs to the alpha-defensin family.

Its subcellular location is the secreted. Its function is as follows. Probably contributes to the antimicrobial barrier function of the small bowel mucosa. In Mus musculus (Mouse), this protein is Alpha-defensin 5 (Defa5).